The chain runs to 121 residues: Small ribosomal subunit protein uS13 (121 aa).

Residues 93-121 (RGLPMRGQRTRTNARTRKGPRKAAQSLKK) form a disordered region.

This sequence belongs to the universal ribosomal protein uS13 family. As to quaternary structure, part of the 30S ribosomal subunit. Forms a loose heterodimer with protein S19. Forms two bridges to the 50S subunit in the 70S ribosome.

In terms of biological role, located at the top of the head of the 30S subunit, it contacts several helices of the 16S rRNA. In the 70S ribosome it contacts the 23S rRNA (bridge B1a) and protein L5 of the 50S subunit (bridge B1b), connecting the 2 subunits; these bridges are implicated in subunit movement. Contacts the tRNAs in the A and P-sites. The chain is Small ribosomal subunit protein uS13 from Variovorax paradoxus (strain S110).